Consider the following 396-residue polypeptide: Protein nipi-4 (396 aa).

The Extracellular portion of the chain corresponds to 1-20 (MELDHTPPPSVLNDNCSASY). The N-linked (GlcNAc...) asparagine glycan is linked to asparagine 15. A helical membrane pass occupies residues 21 to 41 (MTPYATVIAMSGLYLLAIFYF). Residues 42–396 (CKKSKKMCQP…EHHCQSVIHY (355 aa)) are Cytoplasmic-facing. The Protein kinase domain occupies 81–368 (EVDDFQIGQT…SRLSELHHIV (288 aa)). ATP is bound by residues 87-95 (IGQTADGFI) and lysine 111.

Belongs to the protein kinase superfamily. Tyr protein kinase family. In terms of tissue distribution, expressed in the epidermis of larvae and adults and in vulval and rectal cells.

The protein resides in the membrane. Pseudokinase which plays a role in resistance to fungal infection by promoting expression of antimicrobial peptides (nlp-29, nlp-31, nlp-34, cnc-1, cnc-2 and cnc-4) in the epidermis. In addition, up-regulates nlp-29 expression upon physical wounding and in response to phorbol ester PMA treatment. The sequence is that of Protein nipi-4 from Caenorhabditis elegans.